We begin with the raw amino-acid sequence, 266 residues long: Hydroxyethylthiazole kinase (266 aa).

Position 43 (Met43) interacts with substrate. ATP contacts are provided by Arg119 and Thr166. Gly193 contributes to the substrate binding site.

It belongs to the Thz kinase family. The cofactor is Mg(2+).

The enzyme catalyses 5-(2-hydroxyethyl)-4-methylthiazole + ATP = 4-methyl-5-(2-phosphooxyethyl)-thiazole + ADP + H(+). It functions in the pathway cofactor biosynthesis; thiamine diphosphate biosynthesis; 4-methyl-5-(2-phosphoethyl)-thiazole from 5-(2-hydroxyethyl)-4-methylthiazole: step 1/1. Its function is as follows. Catalyzes the phosphorylation of the hydroxyl group of 4-methyl-5-beta-hydroxyethylthiazole (THZ). The protein is Hydroxyethylthiazole kinase of Methanococcus maripaludis (strain C7 / ATCC BAA-1331).